The chain runs to 473 residues: Catalase easC (473 aa).

Positions methionine 1–serine 15 are enriched in low complexity. Positions methionine 1–aspartate 31 are disordered. Histidine 54 is an active-site residue. Tyrosine 344 is a binding site for heme. Residues leucine 352–alanine 389 form a disordered region. Positions lysine 366–glutamate 377 are enriched in basic and acidic residues.

Belongs to the catalase family. It depends on heme as a cofactor.

It participates in alkaloid biosynthesis; ergot alkaloid biosynthesis. Its function is as follows. Catalase; part of the gene cluster that mediates the biosynthesis of fungal ergot alkaloid. DmaW catalyzes the first step of ergot alkaloid biosynthesis by condensing dimethylallyl diphosphate (DMAP) and tryptophan to form 4-dimethylallyl-L-tryptophan. The second step is catalyzed by the methyltransferase easF that methylates 4-dimethylallyl-L-tryptophan in the presence of S-adenosyl-L-methionine, resulting in the formation of 4-dimethylallyl-L-abrine. The catalase easC and the FAD-dependent oxidoreductase easE then transform 4-dimethylallyl-L-abrine to chanoclavine-I which is further oxidized by easD in the presence of NAD(+), resulting in the formation of chanoclavine-I aldehyde. Agroclavine dehydrogenase easG then mediates the conversion of chanoclavine-I aldehyde to agroclavine via a non-enzymatic adduct reaction: the substrate is an iminium intermediate that is formed spontaneously from chanoclavine-I aldehyde in the presence of glutathione. The presence of easA is not required to complete this reaction. Further conversion of agroclavine to paspalic acid is a two-step process involving oxidation of agroclavine to elymoclavine and of elymoclavine to paspalic acid, the second step being performed by the elymoclavine oxidase cloA. Paspalic acid is then further converted to D-lysergic acid. Ergopeptines are assembled from D-lysergic acid and three different amino acids by the D-lysergyl-peptide-synthetases composed each of a monomudular and a trimodular nonribosomal peptide synthetase subunit. LpsB and lpsC encode the monomodular subunits responsible for D-lysergic acid activation and incorporation into the ergopeptine backbone. LpsA1 and A2 subunits encode the trimodular nonribosomal peptide synthetase assembling the tripeptide portion of ergopeptines. LpsA1 is responsible for formation of the major ergopeptine, ergotamine, and lpsA2 for alpha-ergocryptine, the minor ergopeptine of the total alkaloid mixture elaborated by C.purpurea. D-lysergyl-tripeptides are assembled by the nonribosomal peptide synthetases and released as N-(D-lysergyl-aminoacyl)-lactams. Cyclolization of the D-lysergyl-tripeptides is performed by the Fe(2+)/2-ketoglutarate-dependent dioxygenase easH which introduces a hydroxyl group into N-(D-lysergyl-aminoacyl)-lactam at alpha-C of the aminoacyl residue followed by spontaneous condensation with the terminal lactam carbonyl group. This is Catalase easC from Claviceps purpurea (strain 20.1) (Ergot fungus).